The chain runs to 167 residues: UPF0225 protein VP1145 (167 aa).

It belongs to the UPF0225 family.

This Vibrio parahaemolyticus serotype O3:K6 (strain RIMD 2210633) protein is UPF0225 protein VP1145.